We begin with the raw amino-acid sequence, 219 residues long: Probable nicotinate-nucleotide adenylyltransferase (219 aa).

The protein belongs to the NadD family.

The enzyme catalyses nicotinate beta-D-ribonucleotide + ATP + H(+) = deamido-NAD(+) + diphosphate. It functions in the pathway cofactor biosynthesis; NAD(+) biosynthesis; deamido-NAD(+) from nicotinate D-ribonucleotide: step 1/1. Its function is as follows. Catalyzes the reversible adenylation of nicotinate mononucleotide (NaMN) to nicotinic acid adenine dinucleotide (NaAD). This is Probable nicotinate-nucleotide adenylyltransferase from Pseudomonas putida (strain GB-1).